We begin with the raw amino-acid sequence, 409 residues long: Chaetoglobosin A biosynthesis cluster protein C (409 aa).

An HTH CENPB-type domain is found at 51 to 120 (DLPANSRKLT…VKRQPQLRTR (70 aa)). Positions 84–113 (RGVEDMANHLLRERDAPPVGKLWAHNFVKR) form a DNA-binding region, H-T-H motif. 2 disordered regions span residues 243 to 269 (PTHP…ETRS) and 320 to 350 (ANEP…QDPL). The span at 255-269 (PWASKTPYNAQETRS) shows a compositional bias: polar residues.

Its subcellular location is the nucleus. Part of the gene cluster that mediates the biosynthesis of chaetoglobosin A which has a unique inhibitory activity against actin polymerization in mammalian cells. Chaetoglobosin A and its intermediates are involved in the morphological differentiation of C.globosum. The first step of the pathway is the synthesis of prochaetoglobosin I via condensation of one acetyl-CoA, 8 malonyl-CoA, and a L-tryptophan molecule by the PKS-NRPS hybrid synthetase cheA, followed by reduction of backbone double bond to install desired geometry by the enoyl reductase cheB. Further multiple oxidation steps performed by the cytochrome P450 monooxygenases cheE and cheG, as well as by the FAD-linked oxidoreductase cheF, lead to the formation of chaetoglobosin A. Depending on the order of action of these reductases, distinct intermediates can be identified. Within the pathway, the cytochrome P450 monooxygenase cheE catalyzes a stereospecific epoxidation on prochaetoglobosin I, cytoglobosin D, and chaetoglobosin J intermediates. The FAD-linked oxidoreductase cheF performs dehydrogenation of the C-20 hydroxyl groups in the 20-dihyrochaetoglobosin A and cytoglobosin D intermediates. Finally, the cytochrome P450 monooxygenase cheG can catalyze the stereospecific dihydroxylation of prochaetoglobosin I and prochaetoglobosin IV at C-19 and C-20, respectively. The Diels-Alderase cheD may play a role in the post-PKS-NRPS biosynthetic steps catalyzing Diels-Alder cyclization. This chain is Chaetoglobosin A biosynthesis cluster protein C, found in Chaetomium globosum (strain ATCC 6205 / CBS 148.51 / DSM 1962 / NBRC 6347 / NRRL 1970) (Soil fungus).